Consider the following 154-residue polypeptide: Protein X (154 aa).

Residues 68–117 (PCALRFTSARCMATTVNAHQILPKVLHKRTLGLPAMSTTDLEAYFKDCLF) form a mitochondrial targeting sequence region.

The protein belongs to the orthohepadnavirus protein X family. As to quaternary structure, may form homodimer. May interact with host CEBPA, CFLAR, CREB1, DDB1, E4F1, HBXIP, HSPD1/HSP60, NFKBIA, POLR2E and SMAD4. Interacts with host SMC5-SMC6 complex and induces its degradation. Interacts with host TRPC4AP; leading to prevent ubiquitination of TRPC4AP. Interacts with host PLSCR1; this interaction promotes ubiquitination and degradation of HBx and impairs HBx-mediated cell proliferation. In terms of processing, a fraction may be phosphorylated in insect cells and HepG2 cells, a human hepatoblastoma cell line. Phosphorylated in vitro by host protein kinase C or mitogen-activated protein kinase. N-acetylated in insect cells.

Its subcellular location is the host cytoplasm. The protein resides in the host nucleus. It localises to the host mitochondrion. Multifunctional protein that plays a role in silencing host antiviral defenses and promoting viral transcription. Does not seem to be essential for HBV infection. May be directly involved in development of cirrhosis and liver cancer (hepatocellular carcinoma). Most of cytosolic activities involve modulation of cytosolic calcium. The effect on apoptosis is controversial depending on the cell types in which the studies have been conducted. May induce apoptosis by localizing in mitochondria and causing loss of mitochondrial membrane potential. May also modulate apoptosis by binding host CFLAR, a key regulator of the death-inducing signaling complex (DISC). Promotes viral transcription by using the host E3 ubiquitin ligase DDB1 to target the SMC5-SMC6 complex to proteasomal degradation. This host complex would otherwise bind to viral episomal DNA, and prevents its transcription. Moderately stimulates transcription of many different viral and cellular transcription elements. Promoters and enhancers stimulated by HBx contain DNA binding sites for NF-kappa-B, AP-1, AP-2, c-EBP, ATF/CREB, or the calcium-activated factor NF-AT. The sequence is that of Protein X from Hepatitis B virus genotype A3 (isolate Cameroon/CMR983/1994) (HBV-A).